The following is a 236-amino-acid chain: MATPHINAQPGDFAETVLMPGDPLRAKYIAETFLEDVKQVCDVRNMFGFTGTYKGKKVSVMGHGMGIPSCCIYVHELIAEYGVKNVIRVGSCGAVRDDVNLMDVVIGMGASTDSKVNRIRFNNHDFAAIADFSLLEEAVKQARAQEVPVKVGNVFSADLFYTPEADIFEKMEKLGILGVDMEAAGIYGVAADLGAKALTILTVSDHIIRGEKLSSEERQKSFNDMMKVALETAINI.

H5 lines the a purine D-ribonucleoside pocket. Residues G21, R25, R44, and 88–91 (RVGS) contribute to the phosphate site. Residues 180–182 (DME) and 204–205 (SD) each bind a purine D-ribonucleoside. D205 functions as the Proton donor in the catalytic mechanism.

It belongs to the PNP/UDP phosphorylase family. In terms of assembly, homohexamer; trimer of homodimers.

It carries out the reaction a purine D-ribonucleoside + phosphate = a purine nucleobase + alpha-D-ribose 1-phosphate. It catalyses the reaction a purine 2'-deoxy-D-ribonucleoside + phosphate = a purine nucleobase + 2-deoxy-alpha-D-ribose 1-phosphate. Catalyzes the reversible phosphorolytic breakdown of the N-glycosidic bond in the beta-(deoxy)ribonucleoside molecules, with the formation of the corresponding free purine bases and pentose-1-phosphate. The polypeptide is Purine nucleoside phosphorylase DeoD-type 2 (Vibrio parahaemolyticus serotype O3:K6 (strain RIMD 2210633)).